The chain runs to 206 residues: MARYLGPKLKLSRREGTDLFLKSGVRAIDSKCKIDTAPGQHGARKPRLSDYGVQLREKQKVRRIYGILEKQFRNYYREATRLKGNTGENLLQLLEGRLDNVVYRMGFATTRAEARQLVSHKAIVVNGKVVNIPSSQVSPEDVVTVREKAKKQARIKAALDLAAQREKPTWIEINADKMEGVYKRLPERSDLSADINEQLIVELYSK.

The S4 RNA-binding domain maps to 96 to 156 (GRLDNVVYRM…EKAKKQARIK (61 aa)).

The protein belongs to the universal ribosomal protein uS4 family. Part of the 30S ribosomal subunit. Contacts protein S5. The interaction surface between S4 and S5 is involved in control of translational fidelity.

In terms of biological role, one of the primary rRNA binding proteins, it binds directly to 16S rRNA where it nucleates assembly of the body of the 30S subunit. Its function is as follows. With S5 and S12 plays an important role in translational accuracy. The chain is Small ribosomal subunit protein uS4 from Tolumonas auensis (strain DSM 9187 / NBRC 110442 / TA 4).